Reading from the N-terminus, the 283-residue chain is Flagellar filament 35 kDa core protein (283 aa).

The protein belongs to the bacterial flagellin family. The flagellum consists of two outer layers around a core that contains several antigenically related polypeptides.

It localises to the periplasmic flagellum. It is found in the periplasm. Component of the core of the flagella. This is Flagellar filament 35 kDa core protein (flaB) from Leptospira interrogans serogroup Icterohaemorrhagiae serovar copenhageni (strain Fiocruz L1-130).